A 65-amino-acid chain; its full sequence is Large ribosomal subunit protein bL33m (65 aa).

The N-terminal 8 residues, 1 to 8 (MFLSAVFF), are a transit peptide targeting the mitochondrion.

Belongs to the bacterial ribosomal protein bL33 family. Component of the mitochondrial large ribosomal subunit (mt-LSU). Mature mammalian 55S mitochondrial ribosomes consist of a small (28S) and a large (39S) subunit. The 28S small subunit contains a 12S ribosomal RNA (12S mt-rRNA) and 30 different proteins. The 39S large subunit contains a 16S rRNA (16S mt-rRNA), a copy of mitochondrial valine transfer RNA (mt-tRNA(Val)), which plays an integral structural role, and 52 different proteins.

The protein localises to the mitochondrion. In Homo sapiens (Human), this protein is Large ribosomal subunit protein bL33m (MRPL33).